The sequence spans 234 residues: Endonuclease V (234 aa).

Residues aspartate 36 and aspartate 104 each contribute to the Mg(2+) site.

This sequence belongs to the endonuclease V family. The cofactor is Mg(2+).

The protein resides in the cytoplasm. The enzyme catalyses Endonucleolytic cleavage at apurinic or apyrimidinic sites to products with a 5'-phosphate.. Functionally, DNA repair enzyme involved in the repair of deaminated bases. Selectively cleaves double-stranded DNA at the second phosphodiester bond 3' to a deoxyinosine leaving behind the intact lesion on the nicked DNA. The polypeptide is Endonuclease V (Yersinia pseudotuberculosis serotype O:1b (strain IP 31758)).